Consider the following 281-residue polypeptide: Pantothenate synthetase (281 aa).

30–37 (MGYLHDGH) is a binding site for ATP. H37 (proton donor) is an active-site residue. Residue Q61 coordinates (R)-pantoate. Q61 provides a ligand contact to beta-alanine. 147-150 (GEKD) serves as a coordination point for ATP. Residue Q153 coordinates (R)-pantoate. ATP is bound by residues I176 and 184–187 (KSSR).

This sequence belongs to the pantothenate synthetase family. As to quaternary structure, homodimer.

It localises to the cytoplasm. The enzyme catalyses (R)-pantoate + beta-alanine + ATP = (R)-pantothenate + AMP + diphosphate + H(+). The protein operates within cofactor biosynthesis; (R)-pantothenate biosynthesis; (R)-pantothenate from (R)-pantoate and beta-alanine: step 1/1. Catalyzes the condensation of pantoate with beta-alanine in an ATP-dependent reaction via a pantoyl-adenylate intermediate. The sequence is that of Pantothenate synthetase from Clostridium acetobutylicum (strain ATCC 824 / DSM 792 / JCM 1419 / IAM 19013 / LMG 5710 / NBRC 13948 / NRRL B-527 / VKM B-1787 / 2291 / W).